Here is a 455-residue protein sequence, read N- to C-terminus: Phosphoglucosamine mutase (455 aa).

The Phosphoserine intermediate role is filled by S104. Residues S104, D253, D255, and D257 each contribute to the Mg(2+) site. Position 104 is a phosphoserine (S104).

The protein belongs to the phosphohexose mutase family. Requires Mg(2+) as cofactor. In terms of processing, activated by phosphorylation.

It carries out the reaction alpha-D-glucosamine 1-phosphate = D-glucosamine 6-phosphate. In terms of biological role, catalyzes the conversion of glucosamine-6-phosphate to glucosamine-1-phosphate. The protein is Phosphoglucosamine mutase of Psychrobacter arcticus (strain DSM 17307 / VKM B-2377 / 273-4).